The sequence spans 223 residues: Putative 3-methyladenine DNA glycosylase (223 aa).

This sequence belongs to the DNA glycosylase MPG family.

The polypeptide is Putative 3-methyladenine DNA glycosylase (Rhodococcus jostii (strain RHA1)).